The sequence spans 245 residues: Terpene cyclase prhH (245 aa).

7 helical membrane-spanning segments follow: residues 17–37, 51–71, 76–96, 113–133, 138–158, 170–190, and 205–225; these read ILAI…VNYI, IGIL…WMFP, HWQG…LVTL, IVFI…ALAA, ALGF…CGIA, SYLI…KLCI, and PMCW…PFLY.

Belongs to the paxB family.

It localises to the membrane. It participates in secondary metabolite biosynthesis; terpenoid biosynthesis. Terpene cyclase; part of the gene cluster that mediates the biosynthesis of paraherquonin, a meroterpenoid with a unique, highly congested hexacyclic molecular architecture. The first step of the pathway is the synthesis of 3,5-dimethylorsellinic acid (DMOA) by the polyketide synthase prhL. Synthesis of DMOA is followed by farnesylation by the prenyltransferase prhE, methylesterification by the methyl-transferase prhM, epoxidation of the prenyl chain by the flavin-dependent monooxygenase prhF, and cyclization of the farnesyl moiety by the terpene cyclase prhH, to yield the tetracyclic intermediate, protoaustinoid A. The short chain dehydrogenase prhI then oxidizes the C-3 alcohol group of the terpene cyclase product to transform protoaustinoid A into protoaustinoid B. The FAD-binding monooxygenase prhJ catalyzes the oxidation of protoaustinoid B into preaustinoid A which is further oxidized into preaustinoid A1 by FAD-binding monooxygenase phrK. Finally, prhA leads to berkeleydione via the berkeleyone B intermediate. PrhA is a multifunctional dioxygenase that first desaturates at C5-C6 to form berkeleyone B, followed by rearrangement of the A/B-ring to form the cycloheptadiene moiety in berkeleydione. Berkeleydione serves as the key intermediate for the biosynthesis of paraherquonin as well as many other meroterpenoids. The cytochrome P450 monooxygenases prhB, prhD, and prhN, as well as the isomerase prhC, are probably involved in the late stage of paraherquonin biosynthesis, after the production of berkeleydione. Especially prhC might be a multifunctional enzyme that catalyzes the D-ring expansion via intramolecular methoxy rearrangement, as well as the hydrolysis of the expanded D-ring. The polypeptide is Terpene cyclase prhH (Penicillium brasilianum).